Here is a 247-residue protein sequence, read N- to C-terminus: DNA polymerase sliding clamp (247 aa).

It belongs to the PCNA family. As to quaternary structure, homotrimer. The subunits circularize to form a toroid; DNA passes through its center. Replication factor C (RFC) is required to load the toroid on the DNA.

Its function is as follows. Sliding clamp subunit that acts as a moving platform for DNA processing. Responsible for tethering the catalytic subunit of DNA polymerase and other proteins to DNA during high-speed replication. The protein is DNA polymerase sliding clamp of Thermofilum pendens (strain DSM 2475 / Hrk 5).